Here is a 427-residue protein sequence, read N- to C-terminus: Enolase (427 aa).

(2R)-2-phosphoglycerate is bound at residue glutamine 163. The active-site Proton donor is the glutamate 205. Mg(2+)-binding residues include aspartate 242, glutamate 285, and aspartate 312. The (2R)-2-phosphoglycerate site is built by lysine 337, arginine 366, serine 367, and lysine 388. Lysine 337 serves as the catalytic Proton acceptor.

Belongs to the enolase family. Mg(2+) serves as cofactor.

It localises to the cytoplasm. The protein localises to the secreted. It is found in the cell surface. It catalyses the reaction (2R)-2-phosphoglycerate = phosphoenolpyruvate + H2O. It participates in carbohydrate degradation; glycolysis; pyruvate from D-glyceraldehyde 3-phosphate: step 4/5. Its function is as follows. Catalyzes the reversible conversion of 2-phosphoglycerate (2-PG) into phosphoenolpyruvate (PEP). It is essential for the degradation of carbohydrates via glycolysis. This is Enolase from Burkholderia mallei (strain NCTC 10247).